A 948-amino-acid chain; its full sequence is Protein translocase subunit SecA (948 aa).

Residues Q91, 109–113 (GEGKT), and D509 contribute to the ATP site.

It belongs to the SecA family. As to quaternary structure, monomer and homodimer. Part of the essential Sec protein translocation apparatus which comprises SecA, SecYEG and auxiliary proteins SecDF. Other proteins may also be involved.

It is found in the cell inner membrane. The protein resides in the cellular thylakoid membrane. It localises to the cytoplasm. The enzyme catalyses ATP + H2O + cellular proteinSide 1 = ADP + phosphate + cellular proteinSide 2.. In terms of biological role, part of the Sec protein translocase complex. Interacts with the SecYEG preprotein conducting channel. Has a central role in coupling the hydrolysis of ATP to the transfer of proteins into and across the cell membrane, serving as an ATP-driven molecular motor driving the stepwise translocation of polypeptide chains across the membrane. Functionally, probably participates in protein translocation into and across both the cytoplasmic and thylakoid membranes in cyanobacterial cells. The sequence is that of Protein translocase subunit SecA from Synechococcus elongatus (strain ATCC 33912 / PCC 7942 / FACHB-805) (Anacystis nidulans R2).